A 37-amino-acid chain; its full sequence is Large ribosomal subunit protein bL36 (37 aa).

Belongs to the bacterial ribosomal protein bL36 family.

In Acetivibrio thermocellus (strain ATCC 27405 / DSM 1237 / JCM 9322 / NBRC 103400 / NCIMB 10682 / NRRL B-4536 / VPI 7372) (Clostridium thermocellum), this protein is Large ribosomal subunit protein bL36.